The sequence spans 102 residues: Small ribosomal subunit protein uS10 (102 aa).

This sequence belongs to the universal ribosomal protein uS10 family. Part of the 30S ribosomal subunit.

Its function is as follows. Involved in the binding of tRNA to the ribosomes. This is Small ribosomal subunit protein uS10 from Parvibaculum lavamentivorans (strain DS-1 / DSM 13023 / NCIMB 13966).